We begin with the raw amino-acid sequence, 371 residues long: DNA repair protein RAD14 (371 aa).

The tract at residues 26-48 (LSSDQLNRIESRNEPLKTRPLAV) is disordered. Residues 32–42 (NRIESRNEPLK) show a composition bias toward basic and acidic residues. The Zn(2+) site is built by C191, C194, C213, and C216. Residues 191–216 (CIECHINIEMDPVLHDVFKLQVCKQC) fold into a zinc finger.

Belongs to the XPA family. In terms of assembly, two monomers bind to kinked/damaged DNA (construct with only the C-terminal DNA-binding domain). Component of the nucleotide excision repair factor 1 (NEF1) complex consisting of RAD1, RAD10 and RAD14.

It localises to the nucleus. Functionally, involved in nucleotide excision repair. Binds specifically to damaged DNA. Required for the incision step. This is DNA repair protein RAD14 (RAD14) from Saccharomyces cerevisiae (strain ATCC 204508 / S288c) (Baker's yeast).